Consider the following 197-residue polypeptide: CASP-like protein 1B2 (197 aa).

Position 2 is an N-acetylalanine (A2). At 2–17 the chain is on the cytoplasmic side; the sequence is AREKIVVAGGTTKSWK. The chain crosses the membrane as a helical span at residues 18 to 38; that stretch reads LLLGLRIFAFMATLAAAIVMS. Residues 39 to 69 are Extracellular-facing; sequence LNKETKTLVVATIGTVPIKATLTAKFQHTPA. A helical transmembrane segment spans residues 70-90; sequence FVFFVIANVMVSFHNLLMIVV. Residues 91–106 lie on the Cytoplasmic side of the membrane; it reads QIFSRKLEYKGLRLLS. Residues 107-127 form a helical membrane-spanning segment; sequence IAILDMLNATLVSAAANAAVF. At 128 to 156 the chain is on the extracellular side; sequence VAELGKNGNKHAKWNKVCDRFTTYCDHGA. A helical membrane pass occupies residues 157–177; the sequence is GAIIAAFAGVILMLLVSAVSI. The Cytoplasmic portion of the chain corresponds to 178–197; sequence SRLLINSKNFSTTATTTSVV.

Belongs to the Casparian strip membrane proteins (CASP) family. In terms of assembly, homodimer and heterodimers.

It localises to the cell membrane. This Arabidopsis thaliana (Mouse-ear cress) protein is CASP-like protein 1B2.